Reading from the N-terminus, the 221-residue chain is Ras-related protein RabS (221 aa).

Residue 16–23 (GDNQCGKS) coordinates GTP. Residues 38 to 47 (GIQLWHGIEI) carry the Effector region motif. GTP is bound by residues 71–75 (DGNGG) and 137–140 (NKCD). Cysteine 218 bears the Cysteine methyl ester mark. Cysteine 218 carries S-geranylgeranyl cysteine lipidation. Positions 219–221 (IIN) are cleaved as a propeptide — removed in mature form.

It belongs to the small GTPase superfamily. Rab family.

It is found in the cell membrane. This chain is Ras-related protein RabS (rabS), found in Dictyostelium discoideum (Social amoeba).